The sequence spans 315 residues: tRNA-dihydrouridine(16) synthase (315 aa).

FMN contacts are provided by residues 7–9 (PME) and glutamine 68. The Proton donor role is filled by cysteine 98. FMN contacts are provided by residues lysine 139, 200-202 (NGE), and 224-225 (GR).

This sequence belongs to the Dus family. DusC subfamily. FMN is required as a cofactor.

The catalysed reaction is 5,6-dihydrouridine(16) in tRNA + NADP(+) = uridine(16) in tRNA + NADPH + H(+). It carries out the reaction 5,6-dihydrouridine(16) in tRNA + NAD(+) = uridine(16) in tRNA + NADH + H(+). In terms of biological role, catalyzes the synthesis of 5,6-dihydrouridine (D), a modified base found in the D-loop of most tRNAs, via the reduction of the C5-C6 double bond in target uridines. DusC specifically modifies U16 in tRNAs. This chain is tRNA-dihydrouridine(16) synthase, found in Escherichia coli (strain K12).